The sequence spans 255 residues: 4-diphosphocytidyl-2-C-methyl-D-erythritol kinase (255 aa).

K9 is an active-site residue. 95 to 105 (PSQAGLGGGSS) is an ATP binding site. D137 is a catalytic residue.

Belongs to the GHMP kinase family. IspE subfamily.

It carries out the reaction 4-CDP-2-C-methyl-D-erythritol + ATP = 4-CDP-2-C-methyl-D-erythritol 2-phosphate + ADP + H(+). It functions in the pathway isoprenoid biosynthesis; isopentenyl diphosphate biosynthesis via DXP pathway; isopentenyl diphosphate from 1-deoxy-D-xylulose 5-phosphate: step 3/6. Catalyzes the phosphorylation of the position 2 hydroxy group of 4-diphosphocytidyl-2C-methyl-D-erythritol. The sequence is that of 4-diphosphocytidyl-2-C-methyl-D-erythritol kinase from Sulfurovum sp. (strain NBC37-1).